A 127-amino-acid polypeptide reads, in one-letter code: Small ribosomal subunit protein uS11 (127 aa).

Belongs to the universal ribosomal protein uS11 family. As to quaternary structure, part of the 30S ribosomal subunit. Interacts with proteins S7 and S18. Binds to IF-3.

In terms of biological role, located on the platform of the 30S subunit, it bridges several disparate RNA helices of the 16S rRNA. Forms part of the Shine-Dalgarno cleft in the 70S ribosome. This chain is Small ribosomal subunit protein uS11, found in Pelodictyon phaeoclathratiforme (strain DSM 5477 / BU-1).